A 448-amino-acid chain; its full sequence is MKAVIIGAGEVGYHIAKALSPKNDVVIIDKDEEAAKRADELDVLVIEGNGANAEILSRVLQNADLLVAVTGVDEVNIVACMTAKLIMKNKNGWKDTKTIARVSNPDYIDSPVTSRAQVGVDLMICPELALASEVADILSSPSAIDAEMFAEGKVRMTEFAISPESKLVGKHMQDLKLADCCIVSAVFREDQIIIPHGDDLIKANDHMVVVGKPESMEDLESVFGSKVSHRTRILLIGCGIVGMYLAKLIDKEENADLRIIEHSKSRCIEVAEILENALVLNGDGTDVSLLREENIEDMDVVVAVTDSDEKNLLCSLLAKQLGAKKVIARADRSDYLPLFEMVGIDMAVSPREATVNEVLKLTMGRGIQTLTTIEGERAEIIEYTASEKSRIVGKPLNKVKFPKGALINMVVRGKETIIPRGDFIVNEGDRVVIFSMASAASEVEKYFK.

Positions 1–124 constitute an RCK N-terminal 1 domain; sequence MKAVIIGAGE…RAQVGVDLMI (124 aa). NAD(+)-binding positions include 7-11, Asp29, 70-71, and Arg101; these read GAGEV and TG. The RCK C-terminal 1 domain occupies 144-225; sequence IDAEMFAEGK…MEDLESVFGS (82 aa). Residues 230-348 form the RCK N-terminal 2 domain; sequence RTRILLIGCG…FEMVGIDMAV (119 aa). Residue 232–262 participates in NAD(+) binding; it reads RILLIGCGIVGMYLAKLIDKEENADLRIIEH. The RCK C-terminal 2 domain occupies 368–448; sequence QTLTTIEGER…AASEVEKYFK (81 aa).

In terms of biological role, part of a potassium transport system. In Methanosarcina mazei (strain ATCC BAA-159 / DSM 3647 / Goe1 / Go1 / JCM 11833 / OCM 88) (Methanosarcina frisia), this protein is Trk system potassium uptake protein TrkA homolog 1 (trkA1).